The following is a 477-amino-acid chain: Methionine aminopeptidase 2 (477 aa).

Residues 1–121 form a disordered region; the sequence is MAGVEEAASC…TDPPSVPICD (121 aa). Alanine 2 bears the N-acetylalanine mark. A compositionally biased stretch (basic residues) spans 36 to 46; the sequence is KKKKRKKKKSK. Serine 45 is modified (phosphoserine). Over residues 54–78 the composition is skewed to basic and acidic residues; sequence EPDKEAGASVDEVTRQLERQALEEK. Phosphoserine; alternate is present on serine 62. O-linked (GlcNAc) serine; alternate glycosylation occurs at serine 62. Residues 79 to 91 are compositionally biased toward acidic residues; the sequence is EKDDDDEDGDGDG. Basic residues predominate over residues 96–108; the sequence is GKKKKKKKKKRGP. Position 230 (histidine 230) interacts with substrate. A divalent metal cation contacts are provided by aspartate 250, aspartate 261, and histidine 330. Histidine 338 serves as a coordination point for substrate. A divalent metal cation contacts are provided by glutamate 363 and glutamate 458.

It belongs to the peptidase M24A family. Methionine aminopeptidase eukaryotic type 2 subfamily. Binds EIF2S1 at low magnesium concentrations. Interacts strongly with the eIF-2 gamma-subunit EIF2S3. Requires Co(2+) as cofactor. The cofactor is Zn(2+). Mn(2+) is required as a cofactor. It depends on Fe(2+) as a cofactor. In terms of processing, contains approximately 12 O-linked N-acetylglucosamine (GlcNAc) residues. O-glycosylation is required for EIF2S1 binding.

The protein resides in the cytoplasm. It catalyses the reaction Release of N-terminal amino acids, preferentially methionine, from peptides and arylamides.. Cotranslationally removes the N-terminal methionine from nascent proteins. The N-terminal methionine is often cleaved when the second residue in the primary sequence is small and uncharged (Met-Ala-, Cys, Gly, Pro, Ser, Thr, or Val). In terms of biological role, protects eukaryotic initiation factor EIF2S1 from translation-inhibiting phosphorylation by inhibitory kinases such as EIF2AK2/PKR and EIF2AK1/HCR. Plays a critical role in the regulation of protein synthesis. In Bos taurus (Bovine), this protein is Methionine aminopeptidase 2.